The following is an 81-amino-acid chain: DNA-directed RNA polymerase subunit Rpo6 (81 aa).

It belongs to the archaeal Rpo6/eukaryotic RPB6 RNA polymerase subunit family. In terms of assembly, part of the RNA polymerase complex.

The protein localises to the cytoplasm. It catalyses the reaction RNA(n) + a ribonucleoside 5'-triphosphate = RNA(n+1) + diphosphate. DNA-dependent RNA polymerase (RNAP) catalyzes the transcription of DNA into RNA using the four ribonucleoside triphosphates as substrates. This Thermofilum pendens (strain DSM 2475 / Hrk 5) protein is DNA-directed RNA polymerase subunit Rpo6.